The primary structure comprises 467 residues: MAEDTKDTTSSNQMWGGRFASGPAAIMEEINASIGFDKKLYAQDIRGSIAHATMLAHQGIISGEDKDKIVTGLNTILSEIEAGQFTFSRKLEDIHMNIEARLADLIGPAAGRLHTARSRNDQVALDFRLWVKEELQKAESLLTDLIAAFLDRAEEHAETVMPGFTHLQTAQPVTFGHHCMAYVEMFGRDRQRVRHAIEHLDESPIGAAALAGTGYAIDRHMTAKALGFREPTRNSIDTVSDRDFALEFLSIAAISAVHLSRLAEEIVIWSTPQFGFIRLSDAFSTGSSIMPQKKNPDAAELVRAKTGRINGSLIALLTIMKGLPLAYSKDMQEDKEQVFDAAESLELALAAMTGMIRDMTVRADRMKAAAGSGFSTATDLADWLVREAGLPFRDAHHVTGRVVALAEEKGCDLADLPLEDLQAIHTAITADIYSVLTVEASVASRKSYGGTAPDEVRKQIKWWRGRN.

Belongs to the lyase 1 family. Argininosuccinate lyase subfamily.

It localises to the cytoplasm. It catalyses the reaction 2-(N(omega)-L-arginino)succinate = fumarate + L-arginine. The protein operates within amino-acid biosynthesis; L-arginine biosynthesis; L-arginine from L-ornithine and carbamoyl phosphate: step 3/3. This Allorhizobium ampelinum (strain ATCC BAA-846 / DSM 112012 / S4) (Agrobacterium vitis (strain S4)) protein is Argininosuccinate lyase.